Here is a 481-residue protein sequence, read N- to C-terminus: WASH complex subunit 1 (481 aa).

Residues 1-54 are required for WASH complex assembly; sequence MVRMTQKRYLEGQVYSVPLIQPDLRREEAVHQITDALQYLEMISTDIFTRVSES. Disordered stretches follow at residues 273 to 417 and 429 to 481; these read SVPA…SGGD and RRKG…DWEA. Residues 304–341 show a composition bias toward pro residues; sequence APPPPPPPPPPPPEPTHVPVPPPGTSAAPPPPPPPPPM. Residues 359–481 form a VCA region; it reads KGAPSEVVQP…AADDEDDWEA (123 aa). In terms of domain architecture, WH2 spans 371-393; that stretch reads GRASLLESIRNAGGIGKANLRNV. The segment covering 392–407 has biased composition (basic and acidic residues); sequence NVKERKMEKKKQKEQE.

Belongs to the WASH1 family. In terms of assembly, component of the WASH complex.

The protein localises to the early endosome membrane. It is found in the recycling endosome membrane. Its function is as follows. Acts as a nucleation-promoting factor at the surface of endosomes, where it recruits and activates the Arp2/3 complex to induce actin polymerization, playing a key role in the fission of tubules that serve as transport intermediates during endosome sorting. The polypeptide is WASH complex subunit 1 (Danio rerio (Zebrafish)).